Reading from the N-terminus, the 443-residue chain is ATP-dependent protease ATPase subunit HslU (443 aa).

ATP-binding positions include Ile-18, 60–65, Asp-256, Glu-321, and Arg-393; that span reads GVGKTE.

It belongs to the ClpX chaperone family. HslU subfamily. In terms of assembly, a double ring-shaped homohexamer of HslV is capped on each side by a ring-shaped HslU homohexamer. The assembly of the HslU/HslV complex is dependent on binding of ATP.

It localises to the cytoplasm. In terms of biological role, ATPase subunit of a proteasome-like degradation complex; this subunit has chaperone activity. The binding of ATP and its subsequent hydrolysis by HslU are essential for unfolding of protein substrates subsequently hydrolyzed by HslV. HslU recognizes the N-terminal part of its protein substrates and unfolds these before they are guided to HslV for hydrolysis. This chain is ATP-dependent protease ATPase subunit HslU, found in Wigglesworthia glossinidia brevipalpis.